Consider the following 189-residue polypeptide: dCTP deaminase (189 aa).

Residues K112 to R117, T136 to E138, Q157, Y171, and Q181 contribute to the dCTP site. E138 (proton donor/acceptor) is an active-site residue.

This sequence belongs to the dCTP deaminase family. Homotrimer.

The catalysed reaction is dCTP + H2O + H(+) = dUTP + NH4(+). Its pathway is pyrimidine metabolism; dUMP biosynthesis; dUMP from dCTP (dUTP route): step 1/2. In terms of biological role, catalyzes the deamination of dCTP to dUTP. This chain is dCTP deaminase, found in Albidiferax ferrireducens (strain ATCC BAA-621 / DSM 15236 / T118) (Rhodoferax ferrireducens).